A 193-amino-acid chain; its full sequence is Xanthine phosphoribosyltransferase (193 aa).

2 residues coordinate xanthine: L20 and T27. 5-phospho-alpha-D-ribose 1-diphosphate is bound at residue 128–132 (ANGQA). A xanthine-binding site is contributed by K156.

Belongs to the purine/pyrimidine phosphoribosyltransferase family. Xpt subfamily. Homodimer.

It is found in the cytoplasm. It catalyses the reaction XMP + diphosphate = xanthine + 5-phospho-alpha-D-ribose 1-diphosphate. The protein operates within purine metabolism; XMP biosynthesis via salvage pathway; XMP from xanthine: step 1/1. Converts the preformed base xanthine, a product of nucleic acid breakdown, to xanthosine 5'-monophosphate (XMP), so it can be reused for RNA or DNA synthesis. This is Xanthine phosphoribosyltransferase from Streptococcus equi subsp. zooepidemicus (strain H70).